A 715-amino-acid chain; its full sequence is Fatty acid oxidation complex subunit alpha (715 aa).

The segment at 1-189 (MIYQGETLSV…KVGAIDAVVA (189 aa)) is enoyl-CoA hydratase/isomerase. Position 296 (Asp296) interacts with substrate. Positions 311–715 (AKATRHAAVL…EMAAQGKTFY (405 aa)) are 3-hydroxyacyl-CoA dehydrogenase. NAD(+) is bound by residues Met325, Asp344, 401 to 403 (VVE), Lys408, and Ser430. Residue His451 is the For 3-hydroxyacyl-CoA dehydrogenase activity of the active site. Position 454 (Asn454) interacts with NAD(+). Positions 501 and 661 each coordinate substrate.

It in the N-terminal section; belongs to the enoyl-CoA hydratase/isomerase family. This sequence in the C-terminal section; belongs to the 3-hydroxyacyl-CoA dehydrogenase family. Heterotetramer of two alpha chains (FadB) and two beta chains (FadA).

It catalyses the reaction a (3S)-3-hydroxyacyl-CoA + NAD(+) = a 3-oxoacyl-CoA + NADH + H(+). The catalysed reaction is a (3S)-3-hydroxyacyl-CoA = a (2E)-enoyl-CoA + H2O. It carries out the reaction a 4-saturated-(3S)-3-hydroxyacyl-CoA = a (3E)-enoyl-CoA + H2O. The enzyme catalyses (3S)-3-hydroxybutanoyl-CoA = (3R)-3-hydroxybutanoyl-CoA. It catalyses the reaction a (3Z)-enoyl-CoA = a 4-saturated (2E)-enoyl-CoA. The catalysed reaction is a (3E)-enoyl-CoA = a 4-saturated (2E)-enoyl-CoA. It functions in the pathway lipid metabolism; fatty acid beta-oxidation. Its function is as follows. Involved in the aerobic and anaerobic degradation of long-chain fatty acids via beta-oxidation cycle. Catalyzes the formation of 3-oxoacyl-CoA from enoyl-CoA via L-3-hydroxyacyl-CoA. It can also use D-3-hydroxyacyl-CoA and cis-3-enoyl-CoA as substrate. The chain is Fatty acid oxidation complex subunit alpha from Aeromonas salmonicida (strain A449).